The chain runs to 690 residues: Cysteine-rich receptor-like protein kinase 21 (690 aa).

The N-terminal stretch at 1 to 24 is a signal peptide; that stretch reads MQKNKMVDLRAIFWFVVISSCAVA. Residues 25–129 enclose the Gnk2-homologous 1 domain; that stretch reads APTCIQRSDF…CLVRYSNHLI (105 aa). Residues 25–281 lie on the Extracellular side of the membrane; it reads APTCIQRSDF…KDGKNISTGS (257 aa). Asparagine 130, asparagine 148, asparagine 155, asparagine 220, asparagine 268, and asparagine 276 each carry an N-linked (GlcNAc...) asparagine glycan. In terms of domain architecture, Gnk2-homologous 2 spans 140 to 246; sequence AEYIEYKYNT…CFMRWDLQPF (107 aa). The chain crosses the membrane as a helical span at residues 282–302; it reads IVAIAVVSVVVSTVLLALGYA. The Cytoplasmic segment spans residues 303–690; the sequence is VSRRRKAYQS…DASITSVRPR (388 aa). The 278-residue stretch at 363–640 folds into the Protein kinase domain; that stretch reads FHKSNKLGHG…IFRMLTNVSI (278 aa). Residues 369–377 and lysine 391 each bind ATP; that span reads LGHGGFGAV. Phosphotyrosine is present on tyrosine 436. Aspartate 488 serves as the catalytic Proton acceptor. Phosphoserine is present on serine 492. Threonine 528 bears the Phosphothreonine mark. Phosphotyrosine is present on tyrosine 536.

The protein belongs to the protein kinase superfamily. Ser/Thr protein kinase family. CRK subfamily.

The protein localises to the membrane. The enzyme catalyses L-seryl-[protein] + ATP = O-phospho-L-seryl-[protein] + ADP + H(+). It carries out the reaction L-threonyl-[protein] + ATP = O-phospho-L-threonyl-[protein] + ADP + H(+). The sequence is that of Cysteine-rich receptor-like protein kinase 21 (CRK21) from Arabidopsis thaliana (Mouse-ear cress).